The primary structure comprises 517 residues: ATP synthase subunit alpha (517 aa).

173-180 (GDRQTGKT) provides a ligand contact to ATP.

It belongs to the ATPase alpha/beta chains family. As to quaternary structure, F-type ATPases have 2 components, CF(1) - the catalytic core - and CF(0) - the membrane proton channel. CF(1) has five subunits: alpha(3), beta(3), gamma(1), delta(1), epsilon(1). CF(0) has three main subunits: a(1), b(2) and c(9-12). The alpha and beta chains form an alternating ring which encloses part of the gamma chain. CF(1) is attached to CF(0) by a central stalk formed by the gamma and epsilon chains, while a peripheral stalk is formed by the delta and b chains.

The protein resides in the cell inner membrane. It catalyses the reaction ATP + H2O + 4 H(+)(in) = ADP + phosphate + 5 H(+)(out). Its function is as follows. Produces ATP from ADP in the presence of a proton gradient across the membrane. The alpha chain is a regulatory subunit. The protein is ATP synthase subunit alpha of Legionella pneumophila (strain Lens).